We begin with the raw amino-acid sequence, 597 residues long: Protein GRISEA (597 aa).

The segment at residues 1 to 41 is a DNA-binding region (copper-fist); it reads MPIINGQKMACGPCIRGHRSTKCNHYNERVMVPVRKPGRPL. Residues C11, C14, C23, and H25 each contribute to the Zn(2+) site. Disordered stretches follow at residues 70–115, 233–352, 407–428, and 467–541; these read PAGT…ASRR, AFVD…PGFG, SRPP…NGNN, and SPNS…SPAL. Over residues 92–103 the composition is skewed to polar residues; sequence SPASRTSSNRVT. Positions 104 to 115 are enriched in low complexity; the sequence is KSGSGSKSASRR. The segment covering 269–281 has biased composition (gly residues); sequence GGSGGGGCCGGGK. Positions 287 to 314 are enriched in pro residues; that stretch reads QAPPPVPAPLPTPPQQQMPNIMPPPQPQ. Residues 469–495 are compositionally biased toward low complexity; sequence NSSHGNSGSADSSANASPSANPLNLAS. Polar residues predominate over residues 521-530; sequence ANESDGSSNA.

It localises to the nucleus. In terms of biological role, copper-sensing transcription factor that regulates copper uptake by transactivation of Ctr3, a high affinity copper permease. Binds to the palindromic UAS sequence 5'-TGTTGCTCANNNNAGAGCAACT-3'. Also transactivates Sod2, a mitochondrial manganese superoxide dismutase through the palindromic UAS sequence 5'-GTTTGCTCA-3' with 352 bp separating the two inverted repeats. Loss of function indirectly leads to rearrangement of mitochondrial DNA associated with senescence in wild-type strains. The chain is Protein GRISEA from Podospora anserina (Pleurage anserina).